The sequence spans 1654 residues: Microtubule cross-linking factor 2 (1654 aa).

Positions 1–188 (METPAGESSA…VAASSVGSSR (188 aa)) are disordered. Over residues 55 to 66 (GSATACGTASSA) the composition is skewed to low complexity. Residues 102-113 (GTGPRPPPPPPS) are compositionally biased toward pro residues. Low complexity predominate over residues 132 to 147 (LGLELALSSDAESAAG). The tract at residues 209–238 (PGGLVRELEELRSENDYLKDEIEELRAEML) is required for association with Golgi apparatus membrane. Coiled coils occupy residues 216–279 (LEEL…AERR), 308–349 (SMRL…LQTE), 448–546 (LKLV…YRSE), 816–843 (IKDLQLVLAEAHDSLRGLQEQLSQERQL), and 1079–1113 (SQEKLQLVERLQGEKQQVEQQVKELQNRLSQLQKA). The interval 348–379 (TELDRPREHSLKKRGTRSLGKTDKKPTAQEDS) is disordered. A compositionally biased stretch (basic and acidic residues) spans 1122–1145 (SDMEKQDNSWKEARSEKTHDKEGV). Residues 1122 to 1146 (SDMEKQDNSWKEARSEKTHDKEGVS) form a disordered region. Ser-1165 and Ser-1251 each carry phosphoserine. A KR-rich domain required for microtubules binding region spans residues 1406–1505 (LVSVRSKQIS…HSGSTESVWK (100 aa)). Disordered stretches follow at residues 1427–1450 (RPCCSPKYGSPKLQRRSVSKLDST), 1537–1560 (PTTAAGEESCKKPEPLSPASYHQP), and 1627–1654 (NTIRHSPSKCRLHPSESGWGGEERAAPQ). The span at 1628 to 1638 (TIRHSPSKCRL) shows a compositional bias: basic residues.

Belongs to the MTCL family. As to quaternary structure, interacts with CLASP2. Interacts with CLASP1. The C-terminal SOGA 25 kDa form occurs as a monomer. In terms of processing, proteolytically cleaved into a C-terminal SOGA 25 kDa form that is detected in plasma. Proteolytically cleaved in primary hepatocytes into a C-terminal SOGA 80 kDa form. Post-translationally, phosphorylated during mitosis in a CDK1-dependent manner. As to expression, expressed in liver (at protein level).

It localises to the secreted. The protein resides in the cytoplasm. It is found in the cytoskeleton. Its subcellular location is the golgi apparatus membrane. The protein localises to the midbody. Microtubule-associated factor that enables integration of the centrosomal and Golgi-associated microtubules on the Golgi membrane, supporting directional migration. Preferentially acts on the perinuclear microtubules accumulated around the Golgi. Associates with the Golgi membrane through the N-terminal coiled-coil region and directly binds microtubules through the C-terminal domain. Required for faithful chromosome segregation during mitosis. Regulates autophagy by playing a role in the reduction of glucose production in an adiponectin- and insulin-dependent manner. The polypeptide is Microtubule cross-linking factor 2 (Mtcl2) (Mus musculus (Mouse)).